The following is a 333-amino-acid chain: EP300-interacting inhibitor of differentiation 3 (333 aa).

It belongs to the NSE4 family. As to quaternary structure, component of the SMC5-SMC6 complex which consists at least of SMC5, SMC6, NSMCE2, NSMCE1, NSMCE4A or EID3 and NSMCE3; EID3 seems to be a testis-specific subunit. NSMCE1, NSMCE4A or EID3 and NSMCE3 probably form a subcomplex that bridges the head domains of the SMC5:SMC6 heterodimer. Homodimer, and heterodimer with EID2. Interacts with the C-terminal region of CREBBP. In terms of tissue distribution, highly expressed in testis.

The protein localises to the nucleus. The protein resides in the cytoplasm. It localises to the chromosome. Its subcellular location is the telomere. Its function is as follows. Tissue-specific component of the SMC5-SMC6 complex, a complex involved in repair of DNA double-strand breaks by homologous recombination. The complex may promote sister chromatid homologous recombination by recruiting the SMC1-SMC3 cohesin complex to double-strand breaks. The complex is required for telomere maintenance via recombination and mediates sumoylation of shelterin complex (telosome) components. In terms of biological role, acts as a repressor of nuclear receptor-dependent transcription possibly by interfering with CREBBP-dependent coactivation. May function as a coinhibitor of other CREBBP/EP300-dependent transcription factors. The sequence is that of EP300-interacting inhibitor of differentiation 3 from Homo sapiens (Human).